A 522-amino-acid chain; its full sequence is Glucose-6-phosphate isomerase (522 aa).

Residue Glu351 is the Proton donor of the active site. Residues His382 and Lys491 contribute to the active site.

It belongs to the GPI family.

It is found in the cytoplasm. It carries out the reaction alpha-D-glucose 6-phosphate = beta-D-fructose 6-phosphate. Its pathway is carbohydrate biosynthesis; gluconeogenesis. The protein operates within carbohydrate degradation; glycolysis; D-glyceraldehyde 3-phosphate and glycerone phosphate from D-glucose: step 2/4. Its function is as follows. Catalyzes the reversible isomerization of glucose-6-phosphate to fructose-6-phosphate. The polypeptide is Glucose-6-phosphate isomerase (Albidiferax ferrireducens (strain ATCC BAA-621 / DSM 15236 / T118) (Rhodoferax ferrireducens)).